We begin with the raw amino-acid sequence, 247 residues long: Carboxy-S-adenosyl-L-methionine synthase (247 aa).

S-adenosyl-L-methionine is bound by residues Tyr38, 63 to 65, Asn131, and Arg198; that span reads GCS.

This sequence belongs to the class I-like SAM-binding methyltransferase superfamily. Cx-SAM synthase family. In terms of assembly, homodimer.

It catalyses the reaction prephenate + S-adenosyl-L-methionine = carboxy-S-adenosyl-L-methionine + 3-phenylpyruvate + H2O. Its function is as follows. Catalyzes the conversion of S-adenosyl-L-methionine (SAM) to carboxy-S-adenosyl-L-methionine (Cx-SAM). The chain is Carboxy-S-adenosyl-L-methionine synthase from Desulforapulum autotrophicum (strain ATCC 43914 / DSM 3382 / VKM B-1955 / HRM2) (Desulfobacterium autotrophicum).